A 349-amino-acid polypeptide reads, in one-letter code: Septin-2 (349 aa).

One can recognise a Septin-type G domain in the interval Lys-33 to Arg-305. The segment at Gly-43–Ser-50 is G1 motif. Residues Gly-43–Ser-50, Thr-77, Gly-103, Lys-182–Glu-190, Gly-240, and Arg-255 contribute to the GTP site. The tract at residues Asp-100–Gly-103 is G3 motif. The segment at Ala-181 to Asp-184 is G4 motif. An important for dimerization region spans residues Trp-259–His-269.

Belongs to the TRAFAC class TrmE-Era-EngA-EngB-Septin-like GTPase superfamily. Septin GTPase family. As to quaternary structure, septins polymerize into heterooligomeric protein complexes that form filaments, and associate with cellular membranes, actin filaments and microtubules. GTPase activity is required for filament formation. Can form heterooligomers with other family members and form filaments.

It is found in the cytoplasm. Its subcellular location is the cytoskeleton. The protein localises to the spindle. It localises to the cleavage furrow. The protein resides in the midbody. It is found in the cell cortex. Its subcellular location is the cell projection. The protein localises to the cilium membrane. Functionally, filament-forming cytoskeletal GTPase. Required for normal organization of the actin cytoskeleton. Plays a role in the biogenesis of polarized columnar-shaped epithelium by maintaining polyglutamylated microtubules, thus facilitating efficient vesicle transport, and by impeding MAP4 binding to tubulin. Required for the progression through mitosis. Forms a scaffold at the midplane of the mitotic splindle required to maintain CENPE localization at kinetochores and consequently chromosome congression. During anaphase, may be required for chromosome segregation and spindle elongation. Plays a role in ciliogenesis and collective cell movements. In cilia, required for the integrity of the diffusion barrier at the base of the primary cilium that prevents diffusion of transmembrane proteins between the cilia and plasma membranes. The chain is Septin-2 from Gallus gallus (Chicken).